A 264-amino-acid chain; its full sequence is Cell cycle regulator CcrZ (264 aa).

ATP-binding residues include F32, W70, and G73. A Brenner's motif [HXDhX3N] motif is present at residues 157 to 164 (HGDVRHSN). The active-site Proton acceptor is D159. An APH motif is present at residues 173 to 196 (IYLVDWDSVRLTDRMFDVAHMLCH).

The protein belongs to the aminoglycoside phosphotransferase family. In terms of assembly, monomer in solution. Interacts with DnaA (via domains I (1-82) and III (111-326)). Interacts with DnaB. Interacts with FtsZ; the interaction is direct and ensures correct localization during the cell cycle.

Its subcellular location is the cytoplasm. It catalyses the reaction D-ribose + ATP = D-ribose 5-phosphate + ADP + H(+). The catalysed reaction is 2-deoxy-D-ribose + ATP = 2-deoxy-D-ribose 5-phosphate + ADP + H(+). Plays a role in cell cycle regulation and chromosome integrity. Activates DnaA-dependent chromosomal DNA replication initiation ensuring that the chromosome is replicated at the right time during the cell cycle. May regulate replication initiation through phosphorylation of a possible second messenger or metabolite, and by interacting with replication initiation proteins. Has ATPase activity with D-ribose and 2-deoxy-D-ribose in vitro, but not with choline. Involved in DNA damage response. In Streptococcus pneumoniae serotype 2 (strain D39 / NCTC 7466), this protein is Cell cycle regulator CcrZ.